The sequence spans 229 residues: Extracellular endonuclease (229 aa).

Residues 1–19 (MSARFIAVFCLFFTVTAHA) form the signal peptide. The tract at residues 69 to 95 (RADASNGNTSSRPGRSGISASAGKPVG) is disordered. Over residues 71-81 (DASNGNTSSRP) the composition is skewed to polar residues.

Belongs to the EndA/NucM nuclease family.

The protein resides in the secreted. This is Extracellular endonuclease (endX) from Pseudomonas fluorescens biotype A.